A 331-amino-acid polypeptide reads, in one-letter code: Probable staphylococcal-like nuclease CAN1 (331 aa).

Residue Gly2 is the site of N-myristoyl glycine attachment. Cys10 is lipidated: S-palmitoyl cysteine. A TNase-like domain is found at His136–Ala313. Asp149 lines the Ca(2+) pocket. The active site involves Arg220. Asp225 is a binding site for Ca(2+). Residues Glu228 and Arg262 contribute to the active site. Residues Gly306 to Ala331 are disordered. Residues Lys318–Ala331 are compositionally biased toward basic and acidic residues.

Belongs to the thermonuclease family. It depends on Ca(2+) as a cofactor.

The protein resides in the cell membrane. Its function is as follows. Enzyme that catalyzes the hydrolysis of both DNA and RNA at the 5' position of the phosphodiester bond. The protein is Probable staphylococcal-like nuclease CAN1 of Oryza sativa subsp. japonica (Rice).